Here is a 223-residue protein sequence, read N- to C-terminus: Ribose-5-phosphate isomerase A (223 aa).

Substrate-binding positions include 32–35 (TGST), 83–86 (DGAD), and 96–99 (KGGG). Catalysis depends on Glu-105, which acts as the Proton acceptor. Lys-123 is a substrate binding site.

Belongs to the ribose 5-phosphate isomerase family. As to quaternary structure, homodimer.

It carries out the reaction aldehydo-D-ribose 5-phosphate = D-ribulose 5-phosphate. It functions in the pathway carbohydrate degradation; pentose phosphate pathway; D-ribose 5-phosphate from D-ribulose 5-phosphate (non-oxidative stage): step 1/1. Catalyzes the reversible conversion of ribose-5-phosphate to ribulose 5-phosphate. This chain is Ribose-5-phosphate isomerase A, found in Acinetobacter baumannii (strain ATCC 17978 / DSM 105126 / CIP 53.77 / LMG 1025 / NCDC KC755 / 5377).